A 345-amino-acid chain; its full sequence is N-acetyl-gamma-glutamyl-phosphate reductase (345 aa).

Cys149 is an active-site residue.

Belongs to the NAGSA dehydrogenase family. Type 1 subfamily.

The protein resides in the cytoplasm. It catalyses the reaction N-acetyl-L-glutamate 5-semialdehyde + phosphate + NADP(+) = N-acetyl-L-glutamyl 5-phosphate + NADPH + H(+). Its pathway is amino-acid biosynthesis; L-arginine biosynthesis; N(2)-acetyl-L-ornithine from L-glutamate: step 3/4. Its function is as follows. Catalyzes the NADPH-dependent reduction of N-acetyl-5-glutamyl phosphate to yield N-acetyl-L-glutamate 5-semialdehyde. In Bacillus subtilis (strain 168), this protein is N-acetyl-gamma-glutamyl-phosphate reductase.